Consider the following 209-residue polypeptide: Uracil phosphoribosyltransferase (209 aa).

5-phospho-alpha-D-ribose 1-diphosphate-binding positions include R79, R104, and 131–139; that span reads DPMLATGGS. Uracil contacts are provided by residues I194 and 199 to 201; that span reads GDA. D200 contributes to the 5-phospho-alpha-D-ribose 1-diphosphate binding site.

The protein belongs to the UPRTase family. It depends on Mg(2+) as a cofactor.

It catalyses the reaction UMP + diphosphate = 5-phospho-alpha-D-ribose 1-diphosphate + uracil. The protein operates within pyrimidine metabolism; UMP biosynthesis via salvage pathway; UMP from uracil: step 1/1. Its activity is regulated as follows. Allosterically activated by GTP. Functionally, catalyzes the conversion of uracil and 5-phospho-alpha-D-ribose 1-diphosphate (PRPP) to UMP and diphosphate. This is Uracil phosphoribosyltransferase from Geobacter sp. (strain M21).